The primary structure comprises 237 residues: Ribonuclease PH (237 aa).

Phosphate-binding positions include arginine 86 and glycine 124–arginine 126.

This sequence belongs to the RNase PH family. As to quaternary structure, homohexameric ring arranged as a trimer of dimers.

It catalyses the reaction tRNA(n+1) + phosphate = tRNA(n) + a ribonucleoside 5'-diphosphate. Phosphorolytic 3'-5' exoribonuclease that plays an important role in tRNA 3'-end maturation. Removes nucleotide residues following the 3'-CCA terminus of tRNAs; can also add nucleotides to the ends of RNA molecules by using nucleoside diphosphates as substrates, but this may not be physiologically important. Probably plays a role in initiation of 16S rRNA degradation (leading to ribosome degradation) during starvation. The chain is Ribonuclease PH from Methylorubrum extorquens (strain CM4 / NCIMB 13688) (Methylobacterium extorquens).